The sequence spans 35 residues: Sperm protamine alpha isoform 2 (35 aa).

The segment at 1 to 35 is disordered; the sequence is MPRRRRRASRPIRRRRRARRSTAVRRRRRVVRRRR. A phosphoserine mark is found at S9 and S21.

Phosphorylated in immature sperm. Dephosphorylated in mature sperm allowing a stronger interaction with DNA. Gonads.

It localises to the nucleus. The protein resides in the chromosome. In terms of biological role, protamines substitute for histones in the chromatin of sperm during the haploid phase of spermatogenesis. They compact sperm DNA into a highly condensed, stable and inactive complex. The chain is Sperm protamine alpha isoform 2 from Scomber scombrus (Atlantic mackerel).